Reading from the N-terminus, the 434-residue chain is 3-ketoacyl-CoA thiolase A, peroxisomal (434 aa).

Residues 1–36 (MSESVGRTSAMHRLQVVLGHLAGRPESSSALQAAPC) constitute a peroxisome transit peptide. The interval 11 to 36 (MHRLQVVLGHLAGRPESSSALQAAPC) is PTS2-type peroxisomal targeting signal. The active-site Acyl-thioester intermediate is the Cys133. Residues Lys183 and Lys244 each carry the N6-acetyllysine modification. Catalysis depends on proton acceptor residues His387 and Cys418.

This sequence belongs to the thiolase-like superfamily. Thiolase family. Homodimer. Interacts (via PTS2-type peroxisomal targeting signal region) with PEX7; leading to its translocation into peroxisomes.

The protein resides in the peroxisome. The enzyme catalyses an acyl-CoA + acetyl-CoA = a 3-oxoacyl-CoA + CoA. It catalyses the reaction 2 acetyl-CoA = acetoacetyl-CoA + CoA. The catalysed reaction is tetradecanoyl-CoA + acetyl-CoA = 3-oxohexadecanoyl-CoA + CoA. It carries out the reaction hexanoyl-CoA + acetyl-CoA = 3-oxooctanoyl-CoA + CoA. The enzyme catalyses 3-oxohexadecanedioyl-CoA + CoA = tetradecanedioyl-CoA + acetyl-CoA. It catalyses the reaction 3-oxo-(6Z,9Z,12Z,15Z,18Z,21Z)-tetracosahexaenoyl-CoA + CoA = (4Z,7Z,10Z,13Z,16Z,19Z)-docosahexaenoyl-CoA + acetyl-CoA. It participates in lipid metabolism; peroxisomal fatty acid beta-oxidation. In terms of biological role, responsible for the thiolytic cleavage of straight chain 3-keto fatty acyl-CoAs (3-oxoacyl-CoAs). Plays an important role in fatty acid peroxisomal beta-oxidation. Catalyzes the cleavage of short, medium, long, and very long straight chain 3-oxoacyl-CoAs. Medium chain straight 3-oxoacyl-CoAs are preferred substrates. In Rattus norvegicus (Rat), this protein is 3-ketoacyl-CoA thiolase A, peroxisomal.